Reading from the N-terminus, the 55-residue chain is Large ribosomal subunit protein bL32 (55 aa).

The disordered stretch occupies residues 1-28; that stretch reads MAVQQNKPTRSKRGMRRSHDALTTATLS.

The protein belongs to the bacterial ribosomal protein bL32 family.

This is Large ribosomal subunit protein bL32 from Serratia proteamaculans (strain 568).